A 496-amino-acid chain; its full sequence is Probable malate:quinone oxidoreductase (496 aa).

The protein belongs to the MQO family. FAD serves as cofactor.

It catalyses the reaction (S)-malate + a quinone = a quinol + oxaloacetate. Its pathway is carbohydrate metabolism; tricarboxylic acid cycle; oxaloacetate from (S)-malate (quinone route): step 1/1. This chain is Probable malate:quinone oxidoreductase, found in Prochlorococcus marinus (strain NATL1A).